Consider the following 395-residue polypeptide: Acetate kinase (395 aa).

Residue asparagine 7 participates in Mg(2+) binding. An ATP-binding site is contributed by lysine 14. Arginine 88 contacts substrate. The active-site Proton donor/acceptor is the aspartate 145. ATP-binding positions include 205–209 (HLGNG), 279–281 (DFR), and 327–331 (GIGEN). Glutamate 381 is a binding site for Mg(2+).

Belongs to the acetokinase family. Homodimer. Mg(2+) serves as cofactor. It depends on Mn(2+) as a cofactor.

It is found in the cytoplasm. The catalysed reaction is acetate + ATP = acetyl phosphate + ADP. It participates in metabolic intermediate biosynthesis; acetyl-CoA biosynthesis; acetyl-CoA from acetate: step 1/2. Functionally, catalyzes the formation of acetyl phosphate from acetate and ATP. Can also catalyze the reverse reaction. This Campylobacter jejuni subsp. jejuni serotype O:6 (strain 81116 / NCTC 11828) protein is Acetate kinase.